The primary structure comprises 6548 residues: Epiplakin (6548 aa).

At Thr-33 the chain carries Phosphothreonine. 9 Plectin repeats span residues 41–78 (AALPTTARSIAGVYVEASGQTQSIYAAIKQGLLPTGLG), 79–116 (LTLLEAQAATGGLVDLAQGQLLPVSEALRRGLVGLELK), 117–154 (EKLLAAERAVTGYPDPYGGEKLSLFQAIKKEVVDRTLG), 155–192 (WRLLEAQLATGGLVDPTQGVQVAPELACQQGLLDKETW), 285–322 (RRYLEGTGGLAGVVLLPGGHKKSFFQATVEHLVSKGIA), 323–360 (LQLLEAQAATRTLVHPTTGQRLWVEEAVKAGLVGPELH), 362–398 (QLLVAEQAVTGYYDPFSSSRIPVFQAMKKGLVDQPLA), 399–436 (LRLLDAQLATGGLICPARRFRLPLEAALRFGCLDEETR), and 437–470 (QRLSQAMGFSDPTTHDRLGYEQLLALSVTDPETG). Residues 49-1123 (SIAGVYVEAS…KASGLHLLPL (1075 aa)) form an interaction with KRT5 region. Residues 545–565 (SVEELAAELKNIVEQAAATAK) are a coiled coil. Plectin repeat units lie at residues 611–648 (QRYLQGTGSIAGLLLPDSQERLSIYEARSKGLLRPGTA), 649–686 (LILLEAQAATGFIIDPKENKRYSVEEALRAGVIGPDVY), 687–724 (AKLLSAEHAVTGYTDPYSGEQISLFQAMQRDLIVRDHG), 725–762 (IRLLEAQIATGGVIDPVHSHRVPVDVAYQRGYFDQILN), and 766–800 (LDPSDDTKGFFDPNTHENLTYLQLLERCVHDSETG). A coiled-coil region spans residues 851-886 (TEDRRRQLLQRYRQRKITLEQVTQLLEKEMRRWTDI). Plectin repeat units follow at residues 931 to 968 (HRYLRGSGTVGGVLLKPSNQRISLYQAMKQKLLPPSTA), 969 to 1006 (LALLEAQAATGTITDPCSMETLSVDEAVCRGVVGAEVY), 1007 to 1044 (GKLKRAEHSITGYRDPFSGKKVSLFRAMKKGLVPVEQA), 1224 to 1284 (QETL…TGLG), 1285 to 1322 (QQLLEAQVASGFLVNPLTNQRLSVEGAVKAGLVGMEQS), 1323 to 1360 (EHLRQVEKAVTGYSDPFSGGSLSLWQAMEKGLVTQSEA), 1361 to 1398 (FPLLQVQLATGGVVDPVHGVHLPQEVAYKLGLLDEQTS), and 1402 to 1436 (TATGKENKLFFDPNSREKVTYQQLRELCVLDADTG). Thr-1551 bears the Phosphothreonine mark. Plectin repeat units lie at residues 1572 to 1609 (RRSLEGGNFIAGVLIQDTKEKMSIPEALRRHILRPGTA), 1610 to 1647 (LVLLEAQAATGFIIDPVENRKLTVEQAFQAGMFGKETY), 1648 to 1685 (MKLLSAERAVTGYTDPYTGEQISLFQAMQRDLIVRDHG), 1686 to 1723 (IRLLEAQIATGGIIDPVHSHRVPVDVAYQRGYFNEEMN), and 1727 to 1761 (SDPSDDTKGFFDPNTHENLTYLQLLERCVEDPETG). The interaction with KRT5 stretch occupies residues 1580–6545 (FIAGVLIQDT…PETGLLFLSL (4966 aa)). Positions 1819 to 1851 (RKLLREYRAQNIGLENLLEVITSTVEETEKQSQ) form a coiled coil. Plectin repeat units lie at residues 1898–1935 (RVYLEGSNYIAGVIAPLTQKVMSFYEASREELIPAGFA), 1936–1973 (AQMLEAQAATGYLMDPCTNQRLCVDEAIAAGLVGEDLR), 1974–2011 (ERLVNAEMAAKGYKDPATGETIPLYQAMERKLVGREEA), 2012–2049 (LRLLEVQVATGGVIDPRHHHRVPLDTACQRGCMCDDSL), 2225–2267 (KRYL…PGTA), 2268–2305 (LVLLEAQAATGFIIDPVNNRRLSVEEAVAAGVVGGEIQ), 2306–2343 (EKLLSAERAVTGYTDPYTGDQISLFQAMQRDLIVRDHG), 2344–2381 (IRLLEAQIATGGVIDPVHSHRVPVDVAYQRGYFDEDMN), and 2385–2419 (ADPGDDTKGFFDPNTHENLTYLQLLRRCVRDPETG). 2 positions are modified to phosphoserine: Ser-2430 and Ser-2508. The segment at 2578–2626 (AEETQESKPKPRDASLKQQDTGARGSGTSPDEGDAQDSSESARQQQEQT) is disordered. The segment covering 2582–2592 (QESKPKPRDAS) has biased composition (basic and acidic residues). 2 stretches are compositionally biased toward polar residues: residues 2593 to 2606 (LKQQDTGARGSGTS) and 2615 to 2626 (SSESARQQQEQT). Plectin repeat units follow at residues 2740 to 2782 (KRYL…PGTA), 2783 to 2820 (LVLLEAQAATGFIIDPVNNRRLSVEEAVAAGVVGGEIQ), 2821 to 2858 (EKLLSAERAVTGYTDPYTGDQISLFQAMQRDLIVRDHG), 2859 to 2896 (IRLLEAQIATGGVIDPVHSHRVPVDVAYQRGYFDEDMN), and 2900 to 2934 (ADPGDDTKGFFDPNTHENLTYLQLLRRCVRDPETG). The interval 2748–2940 (CIAGVLVPVQ…PETGFYMLQL (193 aa)) is interaction with KRT14. Positions 3093–3144 (AEETQESKPKPRDASLKQQDTGARGSGTSPDEGDAQDSSESARQQQEQTLRA) are disordered. A compositionally biased stretch (basic and acidic residues) spans 3097–3107 (QESKPKPRDAS). 2 stretches are compositionally biased toward polar residues: residues 3108–3121 (LKQQDTGARGSGTS) and 3130–3144 (SSESARQQQEQTLRA). Ser-3220 is subject to Phosphoserine. Plectin repeat units follow at residues 3255–3297 (KRYL…PGTA), 3298–3335 (LVLLEAQAATGFIIDPVNNRRLSVEEAVAAGVVGGEIQ), 3336–3373 (EKLLSAERAVTGYTDPYTGDQISLFQAMQRDLIVRDHG), 3374–3411 (IRLLEAQIATGGVIDPVHSHRVPVDVAYQRGYFDEDMN), and 3415–3449 (ADPGDDTKGFFDPNTHENLTYLQLLRRCVRDPETG). Residues Ser-3460 and Ser-3538 each carry the phosphoserine modification. Residues 3608–3659 (AEETQESKPKPRDASLKQQDTGARGSGTSPDEGDAQDSSESARQQQEQTLRA) are disordered. Residues 3612-3622 (QESKPKPRDAS) are compositionally biased toward basic and acidic residues. 2 stretches are compositionally biased toward polar residues: residues 3623–3636 (LKQQDTGARGSGTS) and 3645–3659 (SSESARQQQEQTLRA). Ser-3735 is subject to Phosphoserine. Plectin repeat units lie at residues 3770 to 3812 (KRYL…PGTA), 3813 to 3850 (LVLLEAQAATGFIIDPVNNRRLSVEEAVAAGVVGGEIQ), 3851 to 3888 (EKLLSAERAVTGYTDPYTGDQISLFQAMQRDLIVRDHG), 3889 to 3926 (IRLLEAQIATGGVIDPVHSHRVPVDVAYQRGYFDEDMN), and 3930 to 3964 (ADPGDDTKGFFDPNTHENLTYLQLLRRCVRDPETG). A phosphoserine mark is found at Ser-3975 and Ser-4053. Residues 4123-4174 (AEETQESKPKPRDASLKQQDTGARGSGTSPDEGDAQDSSESARQQQEQTLRA) are disordered. The span at 4127–4137 (QESKPKPRDAS) shows a compositional bias: basic and acidic residues. Polar residues-rich tracts occupy residues 4138–4151 (LKQQDTGARGSGTS) and 4160–4174 (SSESARQQQEQTLRA). Plectin repeat units follow at residues 4285–4327 (KRYL…PGTA), 4328–4365 (LVLLEAQAATGFIIDPVNNRRLSVEEAVAAGVVGGEIQ), 4366–4403 (EKLLSAERAVTGYTDPYTGDQISLFQAMQRDLIVRDHG), 4404–4441 (IRLLEAQIATGGVIDPVHSHRVPVDVAYQRGYFDEDMN), and 4445–4479 (ADPGDDTKGFFDPNTHENLTYLQLLRRCVRDPETG). Positions 4638–4689 (AEETQESKPKPRDASLKQQDTGARGSGTSPDEGDAQDSSESARQQQEQTLRA) are disordered. Over residues 4642–4652 (QESKPKPRDAS) the composition is skewed to basic and acidic residues. Polar residues-rich tracts occupy residues 4653–4666 (LKQQDTGARGSGTS) and 4675–4689 (SSESARQQQEQTLRA). Ser-4765 is subject to Phosphoserine. Plectin repeat units lie at residues 4800-4842 (KRYL…PGTA), 4843-4880 (LVLLEAQAATGFIIDPVNNRRLSVEEAVAAGVVGGEIQ), 4881-4918 (EKLLSAERAVTGYTDPYTGDQISLFQAMQRDLIVRDHG), 4919-4956 (IRLLEAQIATGGVIDPVHSHRVPVDVAYQRGYFDEDMN), and 4960-4994 (ADPGDDTKGFFDPNTHENLTYLQLLRRCVRDPETG). Ser-5005 and Ser-5083 each carry phosphoserine. Residues 5153–5204 (AEETQESKPKPRDASLKQQDTGARGSGTSPDEGDAQDSSESARQQQEQTLRA) are disordered. Over residues 5157–5167 (QESKPKPRDAS) the composition is skewed to basic and acidic residues. 2 stretches are compositionally biased toward polar residues: residues 5168-5181 (LKQQDTGARGSGTS) and 5190-5204 (SSESARQQQEQTLRA). 5 Plectin repeats span residues 5315–5357 (KRYL…PGTA), 5358–5395 (LVLLEAQAATGFIIDPVNNRRLSVEEAVAAGVVGGEIQ), 5396–5433 (EKLLSAERAVTGYTDPYTGDQISLFQAMQRDLIVRDHG), 5434–5471 (IRLLEAQIATGGVIDPVHSHRVPVDVAYQRGYFDEDMN), and 5475–5509 (ADPGDDTKGFFDPNTHENLTYLQLLRRCVRDPETG). The interval 5668-5719 (AEETQESKPKPRDASLKQQDTGARGSGTSPDEGDAQDSSESARQQQEQTLRA) is disordered. Basic and acidic residues predominate over residues 5672–5682 (QESKPKPRDAS). Composition is skewed to polar residues over residues 5683 to 5696 (LKQQDTGARGSGTS) and 5705 to 5719 (SSESARQQQEQTLRA). Residue Ser-5795 is modified to Phosphoserine. 5 Plectin repeats span residues 5830 to 5872 (KRYL…PGTA), 5873 to 5910 (LVLLEAQAATGFIIDPVNNRRLSVEEAVAAGVVGGEIQ), 5911 to 5948 (EKLLSAERAVTGYTDPYTGDQISLFQAMQRDLIVRDHG), 5949 to 5986 (IRLLEAQIATGGVIDPVHSHRVPVDVAYQRGYFDEDMN), and 5990 to 6024 (ADPGDDTKGFFDPNTHENLTYLQLLRRCVRDPETG). Residues Ser-6035 and Ser-6113 each carry the phosphoserine modification. The tract at residues 6183–6234 (AEETQESKPKPRDASLKQQDTGARGSGTSPDEGDAQDSSESARQQQEQTLRA) is disordered. Residues 6187–6197 (QESKPKPRDAS) show a composition bias toward basic and acidic residues. Composition is skewed to polar residues over residues 6198 to 6211 (LKQQDTGARGSGTS) and 6220 to 6234 (SSESARQQQEQTLRA). Ser-6310 is modified (phosphoserine). 5 Plectin repeats span residues 6345–6387 (KRYL…PGTA), 6388–6425 (LVLLEAQAATGFIIDPVNNRRLSVEEAVAAGVVGGEIQ), 6426–6463 (EKLLSAERAVTGYTDPYTGDQISLFQAMQRDLIVKNHG), 6464–6501 (IRLLEAQIATGGVIDPVHSHRVPVDVAYQRGYFDQEMN), and 6505–6539 (ADPGDDTKGFFDPNTHENLTYLQLLQRATIDPETG).

The protein belongs to the plakin or cytolinker family. As to quaternary structure, interacts with KRT5, KRT14 and KRT5/KRT14 heterotetramer; interacts preferentially with assembled filaments rather than keratin monomers. Interacts with KRT8 and KRT18 and KRT8/KRT18 heterotetramer; interacts preferentially with assembled filaments rather than keratin monomers. Interacts with KRT1, VIM and DES; interaction is stronger with KRT1 than with VIM or DES; interaction is dependent of higher-order structure of intermediate filament. High levels in skin, small intestine and salivary gland. Lower levels in lung, uterus and liver. Not detected in brain, kidney, muscle, heart or spleen. In skin, expressed in all epidermal layers but not in the dermis. In intestine, expressed exclusively in the epithelial cell layer of the villi. In liver, expressed at hepatocyte margins. Around the region of the wound, expressed in the upper half of the epidermis. Weakly expressed on the basilar side of the suprabasal layer of the epidermis at the wound's edge. Expressed strongly in the upper layer of the epidermis, especially in larger keratinocytes. Expressed in undifferentiated primary keratinocytes. Strongly expressed in ductal cells, and also expressed in acinar cells. Expressed in hepatocytes and cholangiocytes.

Its subcellular location is the cytoplasm. It localises to the cytoskeleton. The protein localises to the apicolateral cell membrane. It is found in the basolateral cell membrane. The protein resides in the cell junction. Its subcellular location is the hemidesmosome. It localises to the tight junction. The protein localises to the cell projection. Cytoskeletal linker protein that connects to intermediate filaments and controls their reorganization in response to stress. In response to mechanical stress like wound healing, is associated with the machinery for cellular motility by slowing down keratinocyte migration and proliferation and accelerating keratin bundling in proliferating keratinocytes thus contributing to tissue architecture. However in wound healing in corneal epithelium also positively regulates cell differentiation and proliferation and negatively regulates migration thereby controlling corneal epithelium morphogenesis and integrity. In response to cellular stress, plays a role in keratin filament reorganization, probably by protecting keratin filaments against disruption. During liver and pancreas injuries, plays a protective role by chaperoning disease-induced intermediate filament reorganization. The chain is Epiplakin from Mus musculus (Mouse).